Reading from the N-terminus, the 282-residue chain is Putative polysaccharide deacetylase YheN (282 aa).

The helical transmembrane segment at Leu-15–Leu-35 threads the bilayer. Residues Lys-85–Gly-271 enclose the NodB homology domain.

The protein belongs to the polysaccharide deacetylase family.

It localises to the cell membrane. The protein is Putative polysaccharide deacetylase YheN (yheN) of Bacillus subtilis (strain 168).